A 277-amino-acid chain; its full sequence is Small ribosomal subunit protein uS2 (277 aa).

Residues 228 to 241 are compositionally biased toward basic and acidic residues; it reads YEERLQAETDKDAE. A disordered region spans residues 228-277; it reads YEERLQAETDKDAESSTVQQEENPEADIPESIETKESVSAAADSDLDENE.

It belongs to the universal ribosomal protein uS2 family.

The sequence is that of Small ribosomal subunit protein uS2 from Syntrophus aciditrophicus (strain SB).